Here is a 115-residue protein sequence, read N- to C-terminus: Large ribosomal subunit protein bL21 (115 aa).

This sequence belongs to the bacterial ribosomal protein bL21 family. Part of the 50S ribosomal subunit. Contacts protein L20.

In terms of biological role, this protein binds to 23S rRNA in the presence of protein L20. The chain is Large ribosomal subunit protein bL21 from Coxiella burnetii (strain RSA 331 / Henzerling II).